Reading from the N-terminus, the 180-residue chain is Translation initiation factor IF-3 (180 aa).

This sequence belongs to the IF-3 family. As to quaternary structure, monomer.

It is found in the cytoplasm. Its function is as follows. IF-3 binds to the 30S ribosomal subunit and shifts the equilibrium between 70S ribosomes and their 50S and 30S subunits in favor of the free subunits, thus enhancing the availability of 30S subunits on which protein synthesis initiation begins. The chain is Translation initiation factor IF-3 from Mesoplasma florum (strain ATCC 33453 / NBRC 100688 / NCTC 11704 / L1) (Acholeplasma florum).